The chain runs to 179 residues: Large ribosomal subunit protein uL6 (179 aa).

It belongs to the universal ribosomal protein uL6 family. Part of the 50S ribosomal subunit.

Functionally, this protein binds to the 23S rRNA, and is important in its secondary structure. It is located near the subunit interface in the base of the L7/L12 stalk, and near the tRNA binding site of the peptidyltransferase center. The sequence is that of Large ribosomal subunit protein uL6 from Gloeothece citriformis (strain PCC 7424) (Cyanothece sp. (strain PCC 7424)).